Reading from the N-terminus, the 363-residue chain is Uroporphyrinogen decarboxylase (363 aa).

Substrate-binding positions include 36 to 40 (RQAGR), Asp-85, Tyr-160, Ser-215, and His-339.

Belongs to the uroporphyrinogen decarboxylase family. In terms of assembly, homodimer.

The protein localises to the cytoplasm. It catalyses the reaction uroporphyrinogen III + 4 H(+) = coproporphyrinogen III + 4 CO2. It participates in porphyrin-containing compound metabolism; protoporphyrin-IX biosynthesis; coproporphyrinogen-III from 5-aminolevulinate: step 4/4. In terms of biological role, catalyzes the decarboxylation of four acetate groups of uroporphyrinogen-III to yield coproporphyrinogen-III. The polypeptide is Uroporphyrinogen decarboxylase (Saccharopolyspora erythraea (strain ATCC 11635 / DSM 40517 / JCM 4748 / NBRC 13426 / NCIMB 8594 / NRRL 2338)).